The chain runs to 333 residues: Meiotic recombination protein rec24 (333 aa).

Belongs to the MEI4L family. As to quaternary structure, interacts with Rec7, as part of the meiotic recombination initiation complex.

The protein localises to the cytoplasm. It localises to the nucleus. Functionally, required for correct meiotic chromosome segregation and recombination. Accessory protein required for Rec12 activity, which is involved in formation of the double-strand breaks (DSBs) that initiate meiotic recombination. The protein is Meiotic recombination protein rec24 (rec24) of Schizosaccharomyces pombe (strain 972 / ATCC 24843) (Fission yeast).